The chain runs to 118 residues: Small ribosomal subunit protein uS12cz/uS12cy (118 aa).

It belongs to the universal ribosomal protein uS12 family. In terms of assembly, part of the 30S ribosomal subunit.

It is found in the plastid. The protein localises to the chloroplast. Functionally, with S4 and S5 plays an important role in translational accuracy. Located at the interface of the 30S and 50S subunits. The chain is Small ribosomal subunit protein uS12cz/uS12cy (rps12-A) from Helianthus annuus (Common sunflower).